Consider the following 253-residue polypeptide: Vacuolar v-SNARE NYV1 (253 aa).

Residues Met1–Asn231 are Cytoplasmic-facing. The interval Leu147–Asp166 is disordered. Low complexity predominate over residues Asn148 to Asn162. The v-SNARE coiled-coil homology domain occupies Ile167 to Gln227. Residues Ile232 to Leu252 traverse the membrane as a helical; Anchor for type IV membrane protein segment. Residue Trp253 is a topological domain, vacuolar.

The protein belongs to the synaptobrevin family. In terms of assembly, present in a pentameric cis-SNARE complex composed of the v-SNAREs NYV1, VTI1 and YKT6, and the t-SNAREs VAM3 and VAM7 on vacuolar membranes. Interacts in trans with the cognate t-SNARE VAM3 during the docking step of homotypic vacuolar fusion. Interacts with the vacuolar transporter chaperone (VTC) complex and the vacuolar Ca(2+)-ATPase PMC1.

It is found in the vacuole membrane. Functionally, vacuolar v-SNARE required for docking. Only involved in homotypic vacuole fusion. Required for Ca(2+) efflux from the vacuolar lumen, a required signal for subsequent membrane fusion events, by inhibiting vacuolar Ca(2+)-ATPase PMC1 and promoting Ca(2+) release when forming trans-SNARE assemblies during the docking step. The polypeptide is Vacuolar v-SNARE NYV1 (NYV1) (Saccharomyces cerevisiae (strain ATCC 204508 / S288c) (Baker's yeast)).